The following is a 309-amino-acid chain: Homoserine kinase (309 aa).

91–101 (PIGSGLGSSAC) is an ATP binding site.

This sequence belongs to the GHMP kinase family. Homoserine kinase subfamily.

It localises to the cytoplasm. It catalyses the reaction L-homoserine + ATP = O-phospho-L-homoserine + ADP + H(+). It functions in the pathway amino-acid biosynthesis; L-threonine biosynthesis; L-threonine from L-aspartate: step 4/5. Catalyzes the ATP-dependent phosphorylation of L-homoserine to L-homoserine phosphate. The protein is Homoserine kinase of Pectobacterium atrosepticum (strain SCRI 1043 / ATCC BAA-672) (Erwinia carotovora subsp. atroseptica).